The sequence spans 552 residues: DNA ligase (552 aa).

Glu-244 lines the ATP pocket. The active-site N6-AMP-lysine intermediate is Lys-246. Residues Arg-251, Arg-266, Glu-296, Phe-336, Arg-408, and Lys-414 each contribute to the ATP site.

The protein belongs to the ATP-dependent DNA ligase family. Mg(2+) serves as cofactor.

It carries out the reaction ATP + (deoxyribonucleotide)n-3'-hydroxyl + 5'-phospho-(deoxyribonucleotide)m = (deoxyribonucleotide)n+m + AMP + diphosphate.. Functionally, DNA ligase that seals nicks in double-stranded DNA during DNA replication, DNA recombination and DNA repair. The chain is DNA ligase from Methanothrix thermoacetophila (strain DSM 6194 / JCM 14653 / NBRC 101360 / PT) (Methanosaeta thermophila).